A 185-amino-acid polypeptide reads, in one-letter code: Ubiquitin-conjugating enzyme E2 2 (185 aa).

Residues 4–150 (PSKKRLIRDF…VKATVEASWL (147 aa)) form the UBC core domain. C88 serves as the catalytic Glycyl thioester intermediate. The segment covering 149-173 (WLDDGEMPESIEEDDEAEAEAEAEA) has biased composition (acidic residues). Residues 149-185 (WLDDGEMPESIEEDDEAEAEAEAEATVDRSAPQTASA) form a disordered region.

The protein belongs to the ubiquitin-conjugating enzyme family.

The protein resides in the cytoplasm. It is found in the nucleus. The enzyme catalyses S-ubiquitinyl-[E1 ubiquitin-activating enzyme]-L-cysteine + [E2 ubiquitin-conjugating enzyme]-L-cysteine = [E1 ubiquitin-activating enzyme]-L-cysteine + S-ubiquitinyl-[E2 ubiquitin-conjugating enzyme]-L-cysteine.. Its pathway is protein modification; protein ubiquitination. In terms of biological role, catalyzes the covalent attachment of ubiquitin to other proteins. Plays a role in transcription regulation by catalyzing the monoubiquitination of histone H2B to form H2BK123ub1. H2BK123ub1 gives a specific tag for epigenetic transcriptional activation and is also a prerequisite for H3K4me and H3K79me formation. Also involved in postreplication repair of UV-damaged DNA, in N-end rule-dependent protein degradation and in sporulation. This Mycosarcoma maydis (Corn smut fungus) protein is Ubiquitin-conjugating enzyme E2 2 (UBC2).